Consider the following 326-residue polypeptide: Ribosomal large subunit pseudouridine synthase D (326 aa).

An S4 RNA-binding domain is found at 18–91; it reads QRLDQALAEM…IPLDIVYEDD (74 aa). The active site involves aspartate 139. The disordered stretch occupies residues 183-203; it reads GTVNEPISRHPTKRTHMSVHP.

The protein belongs to the pseudouridine synthase RluA family.

The protein resides in the cytoplasm. It carries out the reaction uridine(1911/1915/1917) in 23S rRNA = pseudouridine(1911/1915/1917) in 23S rRNA. Functionally, responsible for synthesis of pseudouridine from uracil at positions 1911, 1915 and 1917 in 23S ribosomal RNA. This chain is Ribosomal large subunit pseudouridine synthase D (rluD), found in Salmonella typhi.